Reading from the N-terminus, the 201-residue chain is Recombination protein RecR (201 aa).

Residues 60–75 (CSRCGNVDTVDPCTVC) form a C4-type zinc finger. Residues 83–178 (SVIIVVEDVA…KITRLAHGVP (96 aa)) form the Toprim domain.

It belongs to the RecR family.

In terms of biological role, may play a role in DNA repair. It seems to be involved in an RecBC-independent recombinational process of DNA repair. It may act with RecF and RecO. The chain is Recombination protein RecR from Rhizobium rhizogenes (strain K84 / ATCC BAA-868) (Agrobacterium radiobacter).